The sequence spans 98 residues: NADH-ubiquinone oxidoreductase chain 4L (98 aa).

The next 3 helical transmembrane spans lie at 1–21 (MSLT…GLLM), 29–49 (SLLC…ITIL), and 61–81 (IILL…LVMV).

This sequence belongs to the complex I subunit 4L family. In terms of assembly, core subunit of respiratory chain NADH dehydrogenase (Complex I) which is composed of 45 different subunits.

The protein localises to the mitochondrion inner membrane. The catalysed reaction is a ubiquinone + NADH + 5 H(+)(in) = a ubiquinol + NAD(+) + 4 H(+)(out). Its function is as follows. Core subunit of the mitochondrial membrane respiratory chain NADH dehydrogenase (Complex I) which catalyzes electron transfer from NADH through the respiratory chain, using ubiquinone as an electron acceptor. Part of the enzyme membrane arm which is embedded in the lipid bilayer and involved in proton translocation. In Ectophylla alba (White bat), this protein is NADH-ubiquinone oxidoreductase chain 4L (MT-ND4L).